A 282-amino-acid polypeptide reads, in one-letter code: Putative phosphoenolpyruvate synthase regulatory protein (282 aa).

Position 162 to 169 (162 to 169 (GVSRSGKT)) interacts with ADP.

Belongs to the pyruvate, phosphate/water dikinase regulatory protein family. PSRP subfamily.

The catalysed reaction is [pyruvate, water dikinase] + ADP = [pyruvate, water dikinase]-phosphate + AMP + H(+). The enzyme catalyses [pyruvate, water dikinase]-phosphate + phosphate + H(+) = [pyruvate, water dikinase] + diphosphate. Functionally, bifunctional serine/threonine kinase and phosphorylase involved in the regulation of the phosphoenolpyruvate synthase (PEPS) by catalyzing its phosphorylation/dephosphorylation. This chain is Putative phosphoenolpyruvate synthase regulatory protein, found in Psychrobacter arcticus (strain DSM 17307 / VKM B-2377 / 273-4).